The chain runs to 204 residues: Holliday junction branch migration complex subunit RuvA (204 aa).

The domain I stretch occupies residues 1–64 (MIGRLQGKLI…EDAHLLFGFS (64 aa)). The segment at 65–143 (TKTDRTLFRE…GLRQPDFFVE (79 aa)) is domain II. The segment at 144 to 155 (SKHITVPDIVSA) is flexible linker. Residues 156-204 (EKETPNDEAVAALVALGYKPPEAAKMVKKVANGDLTSEQLIREALKAAL) form a domain III region.

It belongs to the RuvA family. In terms of assembly, homotetramer. Forms an RuvA(8)-RuvB(12)-Holliday junction (HJ) complex. HJ DNA is sandwiched between 2 RuvA tetramers; dsDNA enters through RuvA and exits via RuvB. An RuvB hexamer assembles on each DNA strand where it exits the tetramer. Each RuvB hexamer is contacted by two RuvA subunits (via domain III) on 2 adjacent RuvB subunits; this complex drives branch migration. In the full resolvosome a probable DNA-RuvA(4)-RuvB(12)-RuvC(2) complex forms which resolves the HJ.

The protein localises to the cytoplasm. Its function is as follows. The RuvA-RuvB-RuvC complex processes Holliday junction (HJ) DNA during genetic recombination and DNA repair, while the RuvA-RuvB complex plays an important role in the rescue of blocked DNA replication forks via replication fork reversal (RFR). RuvA specifically binds to HJ cruciform DNA, conferring on it an open structure. The RuvB hexamer acts as an ATP-dependent pump, pulling dsDNA into and through the RuvAB complex. HJ branch migration allows RuvC to scan DNA until it finds its consensus sequence, where it cleaves and resolves the cruciform DNA. This Actinobacillus succinogenes (strain ATCC 55618 / DSM 22257 / CCUG 43843 / 130Z) protein is Holliday junction branch migration complex subunit RuvA.